We begin with the raw amino-acid sequence, 109 residues long: ATPase inhibitor mai-2, mitochondrial (109 aa).

Disordered stretches follow at residues 17-39 (RFSTGGHGDGAGRGGGSGGSIRD) and 73-95 (QEVDHHKSQLENHQKVLDRHQKR). The segment covering 21–35 (GGHGDGAGRGGGSGG) has biased composition (gly residues). Residues 45-109 (GKMEAAREDE…EAEERALGKE (65 aa)) are a coiled coil.

This sequence belongs to the ATPase inhibitor family.

It localises to the mitochondrion. Functionally, thought to be a regulatory component of the ATP-synthesizing complex in the mitochondria. This chain is ATPase inhibitor mai-2, mitochondrial, found in Caenorhabditis briggsae.